The chain runs to 325 residues: GPI-linked NAD(P)(+)--arginine ADP-ribosyltransferase 1 (325 aa).

A signal peptide spans 1-22; it reads MKIPAMMSLLLVSVGLRDGVQV. Intrachain disulfides connect Cys53-Cys272 and Cys169-Cys219. N-linked (GlcNAc...) asparagine glycosylation occurs at Asn65. Residues 73 to 268 form the TR mART core domain; sequence KVYADGWAQA…IYLRALGKRS (196 aa). Tyr117 and Arg174 together coordinate NAD(+). Active-site residues include Arg174 and Ser197. Residue Ser228 coordinates NAD(+). Glu235 is an active-site residue. Asn248 is a glycosylation site (N-linked (GlcNAc...) asparagine). The GPI-anchor amidated serine moiety is linked to residue Ser290. Residues 291 to 325 constitute a propeptide, removed in mature form; sequence APGSISASCSLLLLLLFLVLSALPENPGLQQLTRC.

It belongs to the Arg-specific ADP-ribosyltransferase family. As to expression, abundantly expressed in cardiac and skeletal muscle. Low levels also found in lung.

The protein resides in the sarcoplasmic reticulum membrane. The enzyme catalyses L-arginyl-[protein] + NAD(+) = N(omega)-(ADP-D-ribosyl)-L-arginyl-[protein] + nicotinamide + H(+). Its function is as follows. Has ADP-ribosyltransferase activity toward GLP1R. In Mus musculus (Mouse), this protein is GPI-linked NAD(P)(+)--arginine ADP-ribosyltransferase 1 (Art1).